A 332-amino-acid polypeptide reads, in one-letter code: MLWLFQSLLFVFCFGPGNVVSQSSLTPLMVNGILGESVTLPLEFPAGEKVNFITWLFNETSLAFIVPHETKSPEIHVTNPKQGKRLNFTQSYSLQLSNLKMEDTGSYRAQISTKTSAKLSSYTLRILRQLRNIQVTNHSQLFQNMTCELHLTCSVEDADDNVSFRWEALGNTLSSQPNLTVSWDPRISSEQDYTCIAENAVSNLSFSVSAQKLCEDVKIQYTDTKMILFMVSGICIVFGFIILLLLVLRKRRDSLSLSTQRTQGPAESARNLEYVSVSPTNNTVYASVTHSNRETEIWTPRENDTITIYSTINHSKESKPTFSRATALDNVV.

Positions 1-21 are cleaved as a signal peptide; it reads MLWLFQSLLFVFCFGPGNVVS. Topologically, residues 22 to 226 are extracellular; it reads QSSLTPLMVN…VKIQYTDTKM (205 aa). The Ig-like V-type domain occupies 35–120; the sequence is GESVTLPLEF…ISTKTSAKLS (86 aa). Residues Asn58, Asn87, Asn137, Asn144, Asn161, Asn178, and Asn203 are each glycosylated (N-linked (GlcNAc...) asparagine). One can recognise an Ig-like C2-type domain in the interval 132–209; it reads NIQVTNHSQL…AVSNLSFSVS (78 aa). 2 cysteine pairs are disulfide-bonded: Cys147–Cys214 and Cys153–Cys195. The helical transmembrane segment at 227–247 threads the bilayer; it reads ILFMVSGICIVFGFIILLLLV. The Cytoplasmic portion of the chain corresponds to 248–331; sequence LRKRRDSLSL…FSRATALDNV (84 aa). A Phosphotyrosine modification is found at Tyr274. Ser278 bears the Phosphoserine mark. Short sequence motifs (ITSM) lie at residues 283-288 and 307-312; these read TVYASV and TIYSTI. Tyr309 is subject to Phosphotyrosine.

In terms of assembly, homodimer. Interacts with PTN6. Interacts (phosphorylated) with PTN11. Interacts (phosphorylated on tyrosine residues) with SH2D1A/SAP and SH2D1B/EAT2; SH2D1A and SH2D1B can associate with the same SLAMF6 molecule; interaction with SH2D1B is mediated by ITSM 2. Post-translationally, phosphorylation in NK cells upon engagment by SLAMF6-expressing target cells is leading to receptor activation. Expressed by all (resting and activated) natural killer cells (NK), T- and B-lymphocytes. Increased surface expression on T-cells of systemic lupus erythematosus (SLE) patients.

The protein localises to the cell membrane. Functionally, self-ligand receptor of the signaling lymphocytic activation molecule (SLAM) family. SLAM receptors triggered by homo- or heterotypic cell-cell interactions are modulating the activation and differentiation of a wide variety of immune cells and thus are involved in the regulation and interconnection of both innate and adaptive immune response. Activities are controlled by presence or absence of small cytoplasmic adapter proteins, SH2D1A/SAP and/or SH2D1B/EAT-2. Triggers cytolytic activity only in natural killer cells (NK) expressing high surface densities of natural cytotoxicity receptors. Positive signaling in NK cells implicates phosphorylation of VAV1. NK cell activation seems to depend on SH2D1B and not on SH2D1A. In conjunction with SLAMF1 controls the transition between positive selection and the subsequent expansion and differentiation of the thymocytic natural killer T (NKT) cell lineage. Promotes T-cell differentiation into a helper T-cell Th17 phenotype leading to increased IL-17 secretion; the costimulatory activity requires SH2D1A. Promotes recruitment of RORC to the IL-17 promoter. In conjunction with SLAMF1 and CD84/SLAMF5 may be a negative regulator of the humoral immune response. In the absence of SH2D1A/SAP can transmit negative signals to CD4(+) T-cells and NKT cells. Negatively regulates germinal center formation by inhibiting T-cell:B-cell adhesion; the function probably implicates increased association with PTPN6/SHP-1 via ITSMs in absence of SH2D1A/SAP. However, reported to be involved in maintaining B-cell tolerance in germinal centers and in preventing autoimmunity. This is SLAM family member 6 (SLAMF6) from Homo sapiens (Human).